A 165-amino-acid polypeptide reads, in one-letter code: Chorismate pyruvate-lyase (165 aa).

Substrate is bound by residues Met35, Arg77, Leu115, and Glu156.

This sequence belongs to the UbiC family. As to quaternary structure, monomer.

Its subcellular location is the cytoplasm. It carries out the reaction chorismate = 4-hydroxybenzoate + pyruvate. It functions in the pathway cofactor biosynthesis; ubiquinone biosynthesis. In terms of biological role, removes the pyruvyl group from chorismate, with concomitant aromatization of the ring, to provide 4-hydroxybenzoate (4HB) for the ubiquinone pathway. This Shigella dysenteriae serotype 1 (strain Sd197) protein is Chorismate pyruvate-lyase.